Consider the following 396-residue polypeptide: Elongation factor Tu (396 aa).

In terms of domain architecture, tr-type G spans 10 to 205; that stretch reads KPHVNIGTIG…AVDESIPDPV (196 aa). The G1 stretch occupies residues 19–26; it reads GHVDHGKT. GTP is bound at residue 19–26; the sequence is GHVDHGKT. Position 26 (Thr-26) interacts with Mg(2+). The interval 62 to 66 is G2; the sequence is GITIN. The segment at 83-86 is G3; sequence DAPG. GTP contacts are provided by residues 83-87 and 138-141; these read DAPGH and NKAD. Positions 138-141 are G4; the sequence is NKAD. The segment at 175 to 177 is G5; that stretch reads SAL.

The protein belongs to the TRAFAC class translation factor GTPase superfamily. Classic translation factor GTPase family. EF-Tu/EF-1A subfamily. In terms of assembly, monomer.

It localises to the cytoplasm. The enzyme catalyses GTP + H2O = GDP + phosphate + H(+). In terms of biological role, GTP hydrolase that promotes the GTP-dependent binding of aminoacyl-tRNA to the A-site of ribosomes during protein biosynthesis. This is Elongation factor Tu from Rhodococcus erythropolis (strain PR4 / NBRC 100887).